Reading from the N-terminus, the 156-residue chain is ATP synthase subunit b (156 aa).

A helical transmembrane segment spans residues 7-29; sequence LLGQAIAFFFFVTFCMKYVWPPL.

The protein belongs to the ATPase B chain family. In terms of assembly, F-type ATPases have 2 components, F(1) - the catalytic core - and F(0) - the membrane proton channel. F(1) has five subunits: alpha(3), beta(3), gamma(1), delta(1), epsilon(1). F(0) has three main subunits: a(1), b(2) and c(10-14). The alpha and beta chains form an alternating ring which encloses part of the gamma chain. F(1) is attached to F(0) by a central stalk formed by the gamma and epsilon chains, while a peripheral stalk is formed by the delta and b chains.

It localises to the cell inner membrane. In terms of biological role, f(1)F(0) ATP synthase produces ATP from ADP in the presence of a proton or sodium gradient. F-type ATPases consist of two structural domains, F(1) containing the extramembraneous catalytic core and F(0) containing the membrane proton channel, linked together by a central stalk and a peripheral stalk. During catalysis, ATP synthesis in the catalytic domain of F(1) is coupled via a rotary mechanism of the central stalk subunits to proton translocation. Its function is as follows. Component of the F(0) channel, it forms part of the peripheral stalk, linking F(1) to F(0). The protein is ATP synthase subunit b of Photobacterium profundum (strain SS9).